The following is a 302-amino-acid chain: tRNA pseudouridine synthase B (302 aa).

The active-site Nucleophile is Asp40.

This sequence belongs to the pseudouridine synthase TruB family. Type 1 subfamily.

The enzyme catalyses uridine(55) in tRNA = pseudouridine(55) in tRNA. In terms of biological role, responsible for synthesis of pseudouridine from uracil-55 in the psi GC loop of transfer RNAs. This is tRNA pseudouridine synthase B from Shouchella clausii (strain KSM-K16) (Alkalihalobacillus clausii).